Reading from the N-terminus, the 494-residue chain is Gram-negative bacteria-binding protein 1 (494 aa).

The signal sequence occupies residues 1-19 (MPGLCIGILLLIGFGCTTA). One can recognise a CBM39 domain in the interval 20–120 (YKIPTPTVEL…QPLPVCNLGG (101 aa)). Asn56 and Asn81 each carry an N-linked (GlcNAc...) asparagine glycan. The tract at residues 126-160 (GCSPGDDDFTDDNQLSTEDSALEPTAPSVCEPSES) is disordered. Residues 135–494 (TDDNQLSTED…DYVRVFATDN (360 aa)) enclose the GH16 domain. The N-linked (GlcNAc...) asparagine glycan is linked to Asn185.

This sequence belongs to the insect beta-1,3-glucan binding protein family.

Its subcellular location is the cell membrane. In terms of biological role, plays a key role in innate immunity by acting as a pattern recognition receptor for beta-1,3-glucan from fungi and lipopolysaccharide from Gram-negative bacteria. Upon recognition of invading microorganism-derived products, acts upstream of protease spz processing enzyme SPE to activate the Toll pathway and to induce the expression of antimicrobial peptides drosomycin, cecropin and attacin. The sequence is that of Gram-negative bacteria-binding protein 1 from Drosophila melanogaster (Fruit fly).